The sequence spans 1483 residues: Ubiquitin fusion degradation protein 4 (1483 aa).

Residues 1-117 (MSENNSHNLD…NNEFGSNPLH (117 aa)) form a disordered region. A compositionally biased stretch (basic and acidic residues) spans 8 to 18 (NLDEHESHSEN). The segment covering 61-70 (EADDGEDDDN) has biased composition (acidic residues). The residue at position 87 (T87) is a Phosphothreonine. A Glycyl lysine isopeptide (Lys-Gly) (interchain with G-Cter in ubiquitin) cross-link involves residue K349. Residues 1007–1081 (CGVKSDSFIN…LIQLWKNKSK (75 aa)) form a K-box region. Residues 1376 to 1483 (AEHGYTMDSS…EEGAGAFLLS (108 aa)) enclose the HECT domain. Residue C1450 is the Glycyl thioester intermediate of the active site.

Belongs to the UPL family. K-HECT subfamily.

The enzyme catalyses S-ubiquitinyl-[E2 ubiquitin-conjugating enzyme]-L-cysteine + [acceptor protein]-L-lysine = [E2 ubiquitin-conjugating enzyme]-L-cysteine + N(6)-ubiquitinyl-[acceptor protein]-L-lysine.. Functionally, E3 ubiquitin-protein ligase which accepts ubiquitin from an E2 ubiquitin-conjugating enzyme in the form of a thioester and then directly transfers the ubiquitin to targeted substrates. This chain is Ubiquitin fusion degradation protein 4 (UFD4), found in Saccharomyces cerevisiae (strain ATCC 204508 / S288c) (Baker's yeast).